We begin with the raw amino-acid sequence, 368 residues long: tRNA(Met) cytidine acetate ligase (368 aa).

Residues 7–20 (IAEFNPFHNGHKYL), Gly96, Asn152, and Arg175 each bind ATP.

This sequence belongs to the TmcAL family.

Its subcellular location is the cytoplasm. It catalyses the reaction cytidine(34) in elongator tRNA(Met) + acetate + ATP = N(4)-acetylcytidine(34) in elongator tRNA(Met) + AMP + diphosphate. In terms of biological role, catalyzes the formation of N(4)-acetylcytidine (ac(4)C) at the wobble position of elongator tRNA(Met), using acetate and ATP as substrates. First activates an acetate ion to form acetyladenylate (Ac-AMP) and then transfers the acetyl group to tRNA to form ac(4)C34. The chain is tRNA(Met) cytidine acetate ligase from Streptococcus pyogenes serotype M5 (strain Manfredo).